Reading from the N-terminus, the 661-residue chain is Phospholipid:diacylglycerol acyltransferase (661 aa).

The segment at M1–R71 is disordered. Topologically, residues M1–L80 are cytoplasmic. The span at H34–G48 shows a compositional bias: basic residues. 2 short sequence motifs (bipartite nuclear localization signal) span residues H43 to S50 and R64 to R71. Positions K54–G70 are enriched in basic and acidic residues. Residues I81 to V101 form a helical membrane-spanning segment. The Lumenal segment spans residues H102–M661. Q162 is a substrate binding site. The short motif at G322 to G326 is the GHSXG lipase motif element. The Acyl-ester intermediate role is filled by S324. Substrate is bound at residue M325. 3 N-linked (GlcNAc...) asparagine glycosylation sites follow: N453, N461, and N469. D567 functions as the Charge relay system in the catalytic mechanism. The N-linked (GlcNAc...) asparagine glycan is linked to N594. The active-site Charge relay system is H618.

The protein belongs to the AB hydrolase superfamily. Lipase family.

It is found in the endoplasmic reticulum membrane. The protein resides in the nucleus inner membrane. The enzyme catalyses a glycerophospholipid + a 1,2-diacyl-sn-glycerol = a monoacylglycerophospholipid + a triacyl-sn-glycerol. It carries out the reaction a 1-acyl-sn-glycerol + a 1,2-diacyl-sn-glycero-3-phosphocholine = a 1-acyl-sn-glycero-3-phosphocholine + a 1,2-diacyl-sn-glycerol. It catalyses the reaction 1,2-di-(9Z-octadecenoyl)-sn-glycero-3-phosphoethanolamine + 1,2-di-(9Z-octadecenoyl)-sn-glycerol = 1-(9Z-octadecenoyl)-sn-glycero-3-phosphoethanolamine + 1,2,3-tri-(9Z-octadecenoyl)-glycerol. The catalysed reaction is 1,2-di-(9Z-octadecenoyl)-sn-glycerol + 1,2-di-(9Z-octadecenoyl)-sn-glycero-3-phosphocholine = 1,2,3-tri-(9Z-octadecenoyl)-glycerol + 1-(9Z-octadecenoyl)-sn-glycero-3-phosphocholine. The enzyme catalyses 1-(9Z-octadecenoyl)-sn-glycerol + 1,2-di-(9Z-octadecenoyl)-sn-glycero-3-phosphocholine = di-(9Z)-octadecenoylglycerol + 1-(9Z-octadecenoyl)-sn-glycero-3-phosphocholine. It carries out the reaction 2-(9Z-octadecenoyl)-glycerol + 1,2-di-(9Z-octadecenoyl)-sn-glycero-3-phosphocholine = 1,2-di-(9Z-octadecenoyl)-glycerol + 1-(9Z-octadecenoyl)-sn-glycero-3-phosphocholine. It catalyses the reaction 1-(9Z-octadecenoyl)-2-hexadecanoyl-sn-glycero-3-phosphoethanolamine + 1,2-di-(9Z-octadecenoyl)-sn-glycerol = 1,2-di-(9Z)-octadecenoyl-3-hexadecanoyl-sn-glycerol + 1-(9Z-octadecenoyl)-sn-glycero-3-phosphoethanolamine. The catalysed reaction is 1-(9Z-octadecenoyl)-2-octadecanoyl-sn-glycero-3-phosphoethanolamine + 1,2-di-(9Z-octadecenoyl)-sn-glycerol = 1,2-di-(9Z)-octadecenoyl-3-octadecanoyl-sn-glycerol + 1-(9Z-octadecenoyl)-sn-glycero-3-phosphoethanolamine. The enzyme catalyses 1-(9Z)-octadecenoyl-2-(9Z,12Z)-octadecadienoyl-sn-glycero-3-phosphoethanolamine + 1,2-di-(9Z-octadecenoyl)-sn-glycerol = 1,2-di-(9Z)-octadecenoyl-3-(9Z,12Z)-octadecadienoyl-sn-glycerol + 1-(9Z-octadecenoyl)-sn-glycero-3-phosphoethanolamine. Its function is as follows. Catalyzes triacylglycerol (TAG) formation by an acyl-CoA independent pathway. The enzyme specifically transfers acyl groups from the sn-2 position of a phospholipid to diacylglycerol (DAG), thus forming an sn-1-lysophospholipid. The preferred acyl donors are phosphatidylethanolamine (PE) and phosphatidylcholine (PC). Also capable of using broad acyl donors such as phosphatidic acid (PA), phosphatidylserine (PS), phosphatidylglycerol (PG) and phosphatidylinositol (PI), as well as monogalactosyldiacylglycerol (MGDG), digalactosyldiacylglycerol (DGDG), and acyl-CoA, and it is more likely to use unsaturated acyl donors. As acyl acceptors, it prefers 1,2- over 1,3-diacylglycerol (DAG). Additionally, has esterification activity that can utilize methanol as acyl acceptor to generate fatty acid methyl esters (FAME). Can also utilize ceramide instead of DAG, acylating the ceramides by attaching a fatty acid to the hydroxy group on the first carbon atom of the long-chain base to produce 1-O-acylceramides. Involved in lipid particle synthesis from the endoplasmic reticulum, promoting localized TAG production at discrete ER subdomains. Relocates from the endoplasmic reticulum to a subdomain of the inner nuclear membrane upon nutrient starvation, where it provides a site of TAG synthesis, which is coupled with nuclear membrane remodeling. In Saccharomyces cerevisiae (strain ATCC 204508 / S288c) (Baker's yeast), this protein is Phospholipid:diacylglycerol acyltransferase.